Consider the following 178-residue polypeptide: Ribosome maturation factor RimM (178 aa).

A PRC barrel domain is found at 99–178 (EGDFYWHDLI…TIEVDWDAGF (80 aa)).

Belongs to the RimM family. Binds ribosomal protein uS19.

It is found in the cytoplasm. Its function is as follows. An accessory protein needed during the final step in the assembly of 30S ribosomal subunit, possibly for assembly of the head region. Essential for efficient processing of 16S rRNA. May be needed both before and after RbfA during the maturation of 16S rRNA. It has affinity for free ribosomal 30S subunits but not for 70S ribosomes. The chain is Ribosome maturation factor RimM from Mannheimia succiniciproducens (strain KCTC 0769BP / MBEL55E).